We begin with the raw amino-acid sequence, 315 residues long: Cobalamin biosynthesis protein CobD (315 aa).

5 consecutive transmembrane segments (helical) span residues 54–74 (GLLFVLTVGMTGVVSWFILFL), 78–98 (IAYWLYVAVFVYLGYTTLAMT), 152–172 (ADGVIAPLFYLFIGGPVLALM), 203–223 (IANFIPARLAWFFLVIASFIL), and 295–315 (LLYTASTIAFIIFASIYLLLF).

The protein belongs to the CobD/CbiB family.

The protein resides in the cell membrane. The protein operates within cofactor biosynthesis; adenosylcobalamin biosynthesis. Its function is as follows. Converts cobyric acid to cobinamide by the addition of aminopropanol on the F carboxylic group. This chain is Cobalamin biosynthesis protein CobD, found in Listeria monocytogenes serotype 4b (strain F2365).